The primary structure comprises 364 residues: tRNA N6-adenosine threonylcarbamoyltransferase (364 aa).

Fe cation is bound by residues H115 and H119. Substrate contacts are provided by residues 137-141, D170, G183, and N288; that span reads LVSGG. D316 is a Fe cation binding site.

The protein belongs to the KAE1 / TsaD family. Fe(2+) serves as cofactor.

It localises to the cytoplasm. It catalyses the reaction L-threonylcarbamoyladenylate + adenosine(37) in tRNA = N(6)-L-threonylcarbamoyladenosine(37) in tRNA + AMP + H(+). In terms of biological role, required for the formation of a threonylcarbamoyl group on adenosine at position 37 (t(6)A37) in tRNAs that read codons beginning with adenine. Is involved in the transfer of the threonylcarbamoyl moiety of threonylcarbamoyl-AMP (TC-AMP) to the N6 group of A37, together with TsaE and TsaB. TsaD likely plays a direct catalytic role in this reaction. The sequence is that of tRNA N6-adenosine threonylcarbamoyltransferase from Bartonella bacilliformis (strain ATCC 35685 / KC583 / Herrer 020/F12,63).